A 24-amino-acid polypeptide reads, in one-letter code: Defensin D6 (24 aa).

It belongs to the DEFL family. Group IV subfamily. Distributed in the epidermal cell layer of leaves and in the subepidermal layer region of stems. Not in roots.

It localises to the secreted. The protein localises to the cell wall. Functionally, antimicrobial peptide. Active against Fusarium spp., Gram-positive and Gram-negative bacterial pathogens. The chain is Defensin D6 from Spinacia oleracea (Spinach).